Consider the following 372-residue polypeptide: tRNA-specific 2-thiouridylase MnmA (372 aa).

Residues 11-18 (GLSGGVDS) and Met36 contribute to the ATP site. An interaction with target base in tRNA region spans residues 106 to 108 (NPD). The active-site Nucleophile is Cys111. Cys111 and Cys204 are disulfide-bonded. Residue Gly136 participates in ATP binding. The tract at residues 154-156 (KDQ) is interaction with tRNA. Cys204 (cysteine persulfide intermediate) is an active-site residue. The interval 311-312 (RY) is interaction with tRNA.

Belongs to the MnmA/TRMU family.

The protein localises to the cytoplasm. It carries out the reaction S-sulfanyl-L-cysteinyl-[protein] + uridine(34) in tRNA + AH2 + ATP = 2-thiouridine(34) in tRNA + L-cysteinyl-[protein] + A + AMP + diphosphate + H(+). In terms of biological role, catalyzes the 2-thiolation of uridine at the wobble position (U34) of tRNA, leading to the formation of s(2)U34. This Mycoplasmopsis synoviae (strain 53) (Mycoplasma synoviae) protein is tRNA-specific 2-thiouridylase MnmA.